An 851-amino-acid polypeptide reads, in one-letter code: Probable disease resistance protein At1g15890 (851 aa).

The NB-ARC domain maps to 139 to 441 (AEKIPAPKVE…CEGFIDGNED (303 aa)). 181–188 (GMGGVGKT) is a binding site for ATP. LRR repeat units lie at residues 514–535 (SLRR…SNSP), 536–557 (NLST…FFRF), 560–582 (ALVV…ISKL), 584–605 (SLQY…FKEL), and 607–629 (KLIH…ATSL).

The protein belongs to the disease resistance NB-LRR family.

Functionally, probable disease resistance protein. The protein is Probable disease resistance protein At1g15890 of Arabidopsis thaliana (Mouse-ear cress).